The primary structure comprises 491 residues: UDP-N-acetylmuramoyl-L-alanyl-D-glutamate--2,6-diaminopimelate ligase (491 aa).

Position 30 (Ser-30) interacts with UDP-N-acetyl-alpha-D-muramoyl-L-alanyl-D-glutamate. An ATP-binding site is contributed by 108-114 (GTNGKTT). Residues Asn-149, 150-151 (TT), Ser-177, and Arg-185 each bind UDP-N-acetyl-alpha-D-muramoyl-L-alanyl-D-glutamate. Position 217 is an N6-carboxylysine (Lys-217). Meso-2,6-diaminopimelate is bound by residues Arg-383, 407 to 410 (DNPR), Gly-457, and Glu-461. The Meso-diaminopimelate recognition motif signature appears at 407–410 (DNPR).

The protein belongs to the MurCDEF family. MurE subfamily. Mg(2+) serves as cofactor. Carboxylation is probably crucial for Mg(2+) binding and, consequently, for the gamma-phosphate positioning of ATP.

The protein resides in the cytoplasm. It catalyses the reaction UDP-N-acetyl-alpha-D-muramoyl-L-alanyl-D-glutamate + meso-2,6-diaminopimelate + ATP = UDP-N-acetyl-alpha-D-muramoyl-L-alanyl-gamma-D-glutamyl-meso-2,6-diaminopimelate + ADP + phosphate + H(+). It functions in the pathway cell wall biogenesis; peptidoglycan biosynthesis. In terms of biological role, catalyzes the addition of meso-diaminopimelic acid to the nucleotide precursor UDP-N-acetylmuramoyl-L-alanyl-D-glutamate (UMAG) in the biosynthesis of bacterial cell-wall peptidoglycan. The chain is UDP-N-acetylmuramoyl-L-alanyl-D-glutamate--2,6-diaminopimelate ligase from Bacillus cereus (strain ATCC 14579 / DSM 31 / CCUG 7414 / JCM 2152 / NBRC 15305 / NCIMB 9373 / NCTC 2599 / NRRL B-3711).